Consider the following 539-residue polypeptide: CTP synthase (539 aa).

The amidoligase domain stretch occupies residues 1-268 (MADTKYIFVT…DETVLRKVGL (268 aa)). Ser-15 is a CTP binding site. A UTP-binding site is contributed by Ser-15. Residue 16–21 (SLGKGI) coordinates ATP. Tyr-56 provides a ligand contact to L-glutamine. Asp-73 is an ATP binding site. Mg(2+) contacts are provided by Asp-73 and Glu-143. CTP-binding positions include 150-152 (DIE), 189-194 (KTKPTQ), and Lys-225. UTP contacts are provided by residues 189 to 194 (KTKPTQ) and Lys-225. The 243-residue stretch at 294-536 (TIALVGKYVE…IREAIKTRKK (243 aa)) folds into the Glutamine amidotransferase type-1 domain. Residue Gly-356 coordinates L-glutamine. Residue Cys-383 is the Nucleophile; for glutamine hydrolysis of the active site. L-glutamine is bound by residues 384–387 (LGMQ), Glu-407, and Arg-464. Active-site residues include His-509 and Glu-511.

The protein belongs to the CTP synthase family. As to quaternary structure, homotetramer.

It carries out the reaction UTP + L-glutamine + ATP + H2O = CTP + L-glutamate + ADP + phosphate + 2 H(+). The catalysed reaction is L-glutamine + H2O = L-glutamate + NH4(+). The enzyme catalyses UTP + NH4(+) + ATP = CTP + ADP + phosphate + 2 H(+). Its pathway is pyrimidine metabolism; CTP biosynthesis via de novo pathway; CTP from UDP: step 2/2. With respect to regulation, allosterically activated by GTP, when glutamine is the substrate; GTP has no effect on the reaction when ammonia is the substrate. The allosteric effector GTP functions by stabilizing the protein conformation that binds the tetrahedral intermediate(s) formed during glutamine hydrolysis. Inhibited by the product CTP, via allosteric rather than competitive inhibition. Functionally, catalyzes the ATP-dependent amination of UTP to CTP with either L-glutamine or ammonia as the source of nitrogen. Regulates intracellular CTP levels through interactions with the four ribonucleotide triphosphates. The protein is CTP synthase of Porphyromonas gingivalis (strain ATCC 33277 / DSM 20709 / CIP 103683 / JCM 12257 / NCTC 11834 / 2561).